The sequence spans 279 residues: Pantothenate synthetase (279 aa).

ATP is bound at residue 26-33; the sequence is MGNLHEGH. Residue His33 is the Proton donor of the active site. Gln57 lines the (R)-pantoate pocket. Position 57 (Gln57) interacts with beta-alanine. Residue 144-147 coordinates ATP; the sequence is GKKD. Gln150 contacts (R)-pantoate. ATP is bound by residues Val173 and 181 to 184; that span reads LSSR.

The protein belongs to the pantothenate synthetase family. Homodimer.

It is found in the cytoplasm. The enzyme catalyses (R)-pantoate + beta-alanine + ATP = (R)-pantothenate + AMP + diphosphate + H(+). The protein operates within cofactor biosynthesis; (R)-pantothenate biosynthesis; (R)-pantothenate from (R)-pantoate and beta-alanine: step 1/1. Its function is as follows. Catalyzes the condensation of pantoate with beta-alanine in an ATP-dependent reaction via a pantoyl-adenylate intermediate. The polypeptide is Pantothenate synthetase (Burkholderia orbicola (strain MC0-3)).